The following is a 687-amino-acid chain: Ribonuclease E (687 aa).

The region spanning 35 to 117 (GDIYLGVVEN…LTGNITLPGR (83 aa)) is the S1 motif domain. 2 residues coordinate Mg(2+): aspartate 296 and aspartate 339. Zn(2+) contacts are provided by cysteine 397 and cysteine 400. Residues 650-687 (PIKLTETMEESEVNAASTANRRRRRRSSASDSDTGEDS) are disordered. A C4 Arg-rich motif, necessary and sufficient to confer PNPase binding on another protein motif is present at residues 670-678 (RRRRRRSSA).

Belongs to the RNase E/G family. May form homodimers or higher order multimers. Interacts with polynucleotide phosphorylase (PNPase, pnp) via the C4 Arg-rich motif (residues 670-678). A homotetramer formed by a dimer of dimers. Mg(2+) serves as cofactor. The cofactor is Zn(2+).

Its subcellular location is the cytoplasm. The enzyme catalyses Endonucleolytic cleavage of single-stranded RNA in A- and U-rich regions.. Functionally, endoribonuclease that plays a central role in rRNA and tRNA processing and mRNA decay. Has been shown to act on 9S rRNA (the precursor of 5S rRNA). The polypeptide is Ribonuclease E (Nostoc sp. (strain PCC 7120 / SAG 25.82 / UTEX 2576)).